A 253-amino-acid chain; its full sequence is Phosphoribosylaminoimidazole-succinocarboxamide synthase (253 aa).

The protein belongs to the SAICAR synthetase family.

The catalysed reaction is 5-amino-1-(5-phospho-D-ribosyl)imidazole-4-carboxylate + L-aspartate + ATP = (2S)-2-[5-amino-1-(5-phospho-beta-D-ribosyl)imidazole-4-carboxamido]succinate + ADP + phosphate + 2 H(+). It functions in the pathway purine metabolism; IMP biosynthesis via de novo pathway; 5-amino-1-(5-phospho-D-ribosyl)imidazole-4-carboxamide from 5-amino-1-(5-phospho-D-ribosyl)imidazole-4-carboxylate: step 1/2. The chain is Phosphoribosylaminoimidazole-succinocarboxamide synthase from Roseobacter denitrificans (strain ATCC 33942 / OCh 114) (Erythrobacter sp. (strain OCh 114)).